A 342-amino-acid chain; its full sequence is Anthranilate phosphoribosyltransferase (342 aa).

5-phospho-alpha-D-ribose 1-diphosphate contacts are provided by residues glycine 83, 86 to 87 (GD), threonine 91, 93 to 96 (NIST), 111 to 119 (KHGGRSVSS), and serine 123. Glycine 83 provides a ligand contact to anthranilate. Residue serine 95 participates in Mg(2+) binding. Arginine 169 contacts anthranilate. 2 residues coordinate Mg(2+): aspartate 228 and glutamate 229.

The protein belongs to the anthranilate phosphoribosyltransferase family. In terms of assembly, homodimer. It depends on Mg(2+) as a cofactor.

It carries out the reaction N-(5-phospho-beta-D-ribosyl)anthranilate + diphosphate = 5-phospho-alpha-D-ribose 1-diphosphate + anthranilate. It functions in the pathway amino-acid biosynthesis; L-tryptophan biosynthesis; L-tryptophan from chorismate: step 2/5. Its function is as follows. Catalyzes the transfer of the phosphoribosyl group of 5-phosphorylribose-1-pyrophosphate (PRPP) to anthranilate to yield N-(5'-phosphoribosyl)-anthranilate (PRA). This Chromobacterium violaceum (strain ATCC 12472 / DSM 30191 / JCM 1249 / CCUG 213 / NBRC 12614 / NCIMB 9131 / NCTC 9757 / MK) protein is Anthranilate phosphoribosyltransferase.